A 246-amino-acid polypeptide reads, in one-letter code: V-type proton ATPase subunit D (246 aa).

It belongs to the V-ATPase D subunit family. In terms of assembly, V-ATPase is a heteromultimeric enzyme made up of two complexes: the ATP-hydrolytic V1 complex and the proton translocation V0 complex. The V1 complex consists of three catalytic AB heterodimers that form a heterohexamer, three peripheral stalks each consisting of EG heterodimers, one central rotor including subunits D and F, and the regulatory subunits C and H. The proton translocation complex V0 consists of the proton transport subunit a, a ring of proteolipid subunits c9c'', rotary subunit d, subunits e and f, and the accessory subunits VhaAC45 and ATP6AP2.

Subunit of the V1 complex of vacuolar(H+)-ATPase (V-ATPase), a multisubunit enzyme composed of a peripheral complex (V1) that hydrolyzes ATP and a membrane integral complex (V0) that translocates protons. V-ATPase is responsible for acidifying and maintaining the pH of intracellular compartments and in some cell types, is targeted to the plasma membrane, where it is responsible for acidifying the extracellular environment. The sequence is that of V-type proton ATPase subunit D from Manduca sexta (Tobacco hawkmoth).